We begin with the raw amino-acid sequence, 190 residues long: Probable chemoreceptor glutamine deamidase CheD (190 aa).

The protein belongs to the CheD family.

The catalysed reaction is L-glutaminyl-[protein] + H2O = L-glutamyl-[protein] + NH4(+). Probably deamidates glutamine residues to glutamate on methyl-accepting chemotaxis receptors (MCPs), playing an important role in chemotaxis. The polypeptide is Probable chemoreceptor glutamine deamidase CheD (Acidiphilium cryptum (strain JF-5)).